Consider the following 348-residue polypeptide: Chitinase (348 aa).

The first 29 residues, 1–29, serve as a signal peptide directing secretion; sequence MKLKKIIPAFPLLSTVAVGLWLTPTQASA. The region spanning 42-348 is the GH18 domain; it reads KVLVGYWHNW…FATRYSNLVK (307 aa). The Proton donor role is filled by E161.

The protein belongs to the glycosyl hydrolase 18 family.

It is found in the secreted. The catalysed reaction is Random endo-hydrolysis of N-acetyl-beta-D-glucosaminide (1-&gt;4)-beta-linkages in chitin and chitodextrins.. Its pathway is glycan degradation; chitin degradation. Involved in chitin degradation. Catalyzes the cleavage of glycosidic linkages in chitooligosaccharides and in alpha- and beta-chitin. Its activity on chitooligosaccharides increases considerably with degrees of polymerization (the initial rate of hydrolysis for GlcNAc5 is about 130-fold higher than that for GlcNAc3). Its activity is greatly stimulated in the presence of the lytic chitin monooxygenase EfCBM33A, which attacks the crystalline structure of chitin and makes the polymer more accessible to the chitinase; combining the two enzymes leads to rapid and complete depolymerization of crystalline chitin, especially with beta-chitin as a substrate. Is likely involved in a chitin degradation pathway that allows E.faecalis V583 to grow on chitin as a carbon source. In Enterococcus faecalis (strain ATCC 700802 / V583), this protein is Chitinase.